Here is a 418-residue protein sequence, read N- to C-terminus: Tyrosine--tRNA ligase (418 aa).

Tyrosine 34 serves as a coordination point for L-tyrosine. The 'HIGH' region motif lies at 39–48 (PTGDSMHIGH). L-tyrosine-binding residues include tyrosine 166 and glutamine 170. The short motif at 228-232 (KFGKT) is the 'KMSKS' region element. Lysine 231 contributes to the ATP binding site. An S4 RNA-binding domain is found at 350–417 (TNIVELLTET…KKNYFLAKVK (68 aa)).

The protein belongs to the class-I aminoacyl-tRNA synthetase family. TyrS type 1 subfamily. As to quaternary structure, homodimer.

It localises to the cytoplasm. It carries out the reaction tRNA(Tyr) + L-tyrosine + ATP = L-tyrosyl-tRNA(Tyr) + AMP + diphosphate + H(+). Its function is as follows. Catalyzes the attachment of tyrosine to tRNA(Tyr) in a two-step reaction: tyrosine is first activated by ATP to form Tyr-AMP and then transferred to the acceptor end of tRNA(Tyr). The protein is Tyrosine--tRNA ligase of Levilactobacillus brevis (Lactobacillus brevis).